Reading from the N-terminus, the 1053-residue chain is Ubiquitin-like modifier-activating enzyme 6 (1053 aa).

M1 is subject to N-acetylmethionine. R46 provides a ligand contact to ATP. The residue at position 54 (T54) is a Phosphothreonine. Residues A470 and D497 each coordinate ATP. Residues D499 and E502 each coordinate Mg(2+). ATP is bound by residues N505, R508, Q509, and K521. N6-acetyllysine is present on K544. V545 is an ATP binding site. D569 contacts Mg(2+). N570 provides a ligand contact to ATP. C625 (glycyl thioester intermediate) is an active-site residue. Residue K729 is modified to N6-acetyllysine. At S737 the chain carries Phosphoserine.

This sequence belongs to the ubiquitin-activating E1 family. As to quaternary structure, forms a thioester with UBD in cells stimulated with tumor necrosis factor-alpha (TNFa) and interferon-gamma (IFNg).

The enzyme catalyses ATP + ubiquitin + [E1 ubiquitin-activating enzyme]-L-cysteine = AMP + diphosphate + S-ubiquitinyl-[E1 ubiquitin-activating enzyme]-L-cysteine.. It functions in the pathway protein modification; protein ubiquitination. Its function is as follows. Activates ubiquitin by first adenylating its C-terminal glycine residue with ATP, and thereafter linking this residue to the side chain of a cysteine residue in E1, yielding a ubiquitin-E1 thioester and free AMP. Specific for ubiquitin, does not activate ubiquitin-like peptides. Also activates UBD/FAT10 conjugation via adenylation of its C-terminal glycine. Differs from UBE1 in its specificity for substrate E2 charging. Does not charge cell cycle E2s, such as CDC34. Essential for embryonic development. This is Ubiquitin-like modifier-activating enzyme 6 (Uba6) from Mus musculus (Mouse).